Consider the following 215-residue polypeptide: Riboflavin synthase (215 aa).

2 Lumazine-binding repeats span residues 1–96 and 97–193; these read MFTG…FGGH and FVSG…YRFL. 2,4-dihydroxypteridine-binding positions include 4 to 6, 47 to 49, 61 to 66, 100 to 102, Lys-135, 144 to 146, and 158 to 163; these read GIV, CLT, DVMPET, GHV, SST, and SVIPHT.

In terms of assembly, homotrimer.

The catalysed reaction is 2 6,7-dimethyl-8-(1-D-ribityl)lumazine + H(+) = 5-amino-6-(D-ribitylamino)uracil + riboflavin. Its pathway is cofactor biosynthesis; riboflavin biosynthesis; riboflavin from 2-hydroxy-3-oxobutyl phosphate and 5-amino-6-(D-ribitylamino)uracil: step 2/2. In terms of biological role, catalyzes the dismutation of two molecules of 6,7-dimethyl-8-ribityllumazine, resulting in the formation of riboflavin and 5-amino-6-(D-ribitylamino)uracil. In Bacillus amyloliquefaciens (Bacillus velezensis), this protein is Riboflavin synthase (ribE).